The sequence spans 518 residues: Cytochrome P450 monooxygenase atnE (518 aa).

The chain crosses the membrane as a helical span at residues 11–31 (FLAAFAVWMGVVVLAFAIFCV). Asparagine 184 carries an N-linked (GlcNAc...) asparagine glycan. Cysteine 458 is a heme binding site.

This sequence belongs to the cytochrome P450 family. The cofactor is heme.

The protein localises to the membrane. It functions in the pathway secondary metabolite biosynthesis. Cytochrome P450 monooxygenase; part of the gene cluster that mediates the biosynthesis of aspercryptins, linear lipopeptides built from six amino acids including 2 highly unusual and nonproteogenic amino acids, 2-amino-octanoic acid (2aoa) and 2-amino-dodecanol (2adol). The core structure of aspercryptins is as follows: Ser/Ala-Thr-Ile/Val-2aoa-Asn-2adol. The first step of aspercryptin biosynthesis is the generation of the fatty acid precursors, octanoic and dodecanoic acids, by the FAS subunits atnF and atnM. The fatty acid precursors are likely transformed into the corresponding alpha-amino fatty acids in three steps. First, they are hydroxylated by the cytochrome P450 monooxygenase atnE, then oxidized to the corresponding alpha-keto acids by the NAD(P)-dependent oxidoreductase atnD, and finally converted to the alpha-amino fatty acids by the PLP-dependent aminotransferases atnH or atnJ. the alpha-amino fatty acids, 2-amino-octanoic and 2-amino-dodecanoic acids, are recognized, activated, and covalently tethered to the NRPS atnA by its fourth and sixth adenylation domains. The second module of atnA is the Thr module and contains an epimerase (E) domain responsible for the epimerization of Thr to D-allo-Thr. Additionally, despite atnA having only one epimerase domain, the first amino acid of aspercryptin A1 is D-Ser, suggesting that serine is either loaded directly as D-Ser on the first module or that the epimerase domain in the threonine module epimerizes both L-Ser and L-Thr. After condensation of the hexapeptide of aspercryptin, the C-terminal reductase (TE) domain might be involved in the reductive release and production of the aldehyde hexapeptide. Further reduction would generate aspercryptins. The variety of aspercryptins produced reflects the flexibility of the atnA NRPS, allowing incorporation of alanine instead of serine, valine for isoleucine, and a C10 fatty amino alcohol instead of the C12 version. AtnB seems to be involved in the selectivity for Ile versus Val by the third module. Moreover, type B, C and D aspercryptins have an additional N-terminal cichorine, acetyl and propionyl group respectively. The chain is Cytochrome P450 monooxygenase atnE from Emericella nidulans (strain FGSC A4 / ATCC 38163 / CBS 112.46 / NRRL 194 / M139) (Aspergillus nidulans).